A 199-amino-acid chain; its full sequence is Recombination protein RecR (199 aa).

Residues 60–75 (CARCHTFTEGEVCSTC) form a C4-type zinc finger. One can recognise a Toprim domain in the interval 83–178 (SRLAVVETPA…HVTRLARGVP (96 aa)).

This sequence belongs to the RecR family.

May play a role in DNA repair. It seems to be involved in an RecBC-independent recombinational process of DNA repair. It may act with RecF and RecO. The protein is Recombination protein RecR of Paracidovorax citrulli (strain AAC00-1) (Acidovorax citrulli).